The primary structure comprises 104 residues: Photosystem II reaction center Psb28 protein (104 aa).

It belongs to the Psb28 family. Part of the photosystem II complex.

Its subcellular location is the cellular thylakoid membrane. The polypeptide is Photosystem II reaction center Psb28 protein (Synechococcus sp. (strain JA-2-3B'a(2-13)) (Cyanobacteria bacterium Yellowstone B-Prime)).